A 508-amino-acid polypeptide reads, in one-letter code: Photosystem II CP47 reaction center protein (508 aa).

6 consecutive transmembrane segments (helical) span residues 21 to 36 (SVHI…WAGS), 101 to 115 (IVFS…IWHW), 140 to 156 (GIHL…SGAF), 203 to 218 (IAAG…FHLS), 237 to 252 (VLSS…AFIV), and 457 to 472 (TFAL…HGAR).

It belongs to the PsbB/PsbC family. PsbB subfamily. As to quaternary structure, PSII is composed of 1 copy each of membrane proteins PsbA, PsbB, PsbC, PsbD, PsbE, PsbF, PsbH, PsbI, PsbJ, PsbK, PsbL, PsbM, PsbT, PsbX, PsbY, PsbZ, Psb30/Ycf12, at least 3 peripheral proteins of the oxygen-evolving complex and a large number of cofactors. It forms dimeric complexes. The cofactor is Binds multiple chlorophylls. PSII binds additional chlorophylls, carotenoids and specific lipids..

It is found in the plastid. The protein localises to the chloroplast thylakoid membrane. One of the components of the core complex of photosystem II (PSII). It binds chlorophyll and helps catalyze the primary light-induced photochemical processes of PSII. PSII is a light-driven water:plastoquinone oxidoreductase, using light energy to abstract electrons from H(2)O, generating O(2) and a proton gradient subsequently used for ATP formation. This is Photosystem II CP47 reaction center protein from Cycas taitungensis (Prince sago).